Reading from the N-terminus, the 109-residue chain is Keratin, type II microfibrillar (109 aa).

Residues 1–10 are linker 1; sequence QNRQCCESNL. Residues 1–109 enclose the IF rod domain; that stretch reads QNRQCCESNL…RLYEEEIRVL (109 aa). Residues 11 to 109 are coil 1B; the sequence is EPLFSGYIET…RLYEEEIRVL (99 aa).

It belongs to the intermediate filament family.

Wool microfibrillar keratin. This chain is Keratin, type II microfibrillar, found in Ovis aries (Sheep).